A 252-amino-acid polypeptide reads, in one-letter code: 5'-nucleotidase SurE (252 aa).

The a divalent metal cation site is built by Asp8, Asp9, Ser39, and Asn91.

This sequence belongs to the SurE nucleotidase family. A divalent metal cation serves as cofactor.

It is found in the cytoplasm. The enzyme catalyses a ribonucleoside 5'-phosphate + H2O = a ribonucleoside + phosphate. Functionally, nucleotidase that shows phosphatase activity on nucleoside 5'-monophosphates. This chain is 5'-nucleotidase SurE, found in Paraburkholderia xenovorans (strain LB400).